The following is a 1040-amino-acid chain: Multidrug resistance protein MdtB (1040 aa).

12 helical membrane passes run 16-36, 347-367, 369-389, 396-416, 440-460, 472-492, 537-557, 863-883, 888-908, 911-931, 968-988, and 998-1018; these read FIMRPVATTLLMVAILLAGII, LMMAIALVVMIIYLFLRNIPA, IIPGVAVPLSLIGTFAVMVFL, LTLMALTIATGFVVDDAIVVI, IGFTIISLIFSLIAVLIPLLF, FAITLAVAILISAVVSLTLTP, WLTLSVALSTLLLSVLLWVFI, LGSTVWLIVAAVVAMYIVLGI, FIHPITILSTLPTAGVGALLA, IAGSELDVIAIIGIILLIGIV, ILMTTLAALLGALPLMLSTGV, and IGMVGGLIVSQVLTLFTTPVI.

Belongs to the resistance-nodulation-cell division (RND) (TC 2.A.6) family. MdtB subfamily. Part of a tripartite efflux system composed of MdtA, MdtB and MdtC. MdtB forms a heteromultimer with MdtC.

The protein resides in the cell inner membrane. The chain is Multidrug resistance protein MdtB from Shigella boydii serotype 4 (strain Sb227).